Here is a 1274-residue protein sequence, read N- to C-terminus: Meiosis inhibitor protein 1 (1274 aa).

Expressed predominantly in testis. Weakly expressed in spleen and thymus. Expressed in the ovaries, Fallopian tubes and uterus.

Required for normal meiotic chromosome synapsis. May be involved in the formation of meiotic double-strand breaks (DSBs) in spermatocytes. The protein is Meiosis inhibitor protein 1 of Homo sapiens (Human).